The chain runs to 151 residues: 16.9 kDa class I heat shock protein 1 (151 aa).

Positions 37-151 (ETAAFANARV…PEVKAIEISG (115 aa)) constitute a sHSP domain.

This sequence belongs to the small heat shock protein (HSP20) family. May form oligomeric structures.

The protein localises to the cytoplasm. The polypeptide is 16.9 kDa class I heat shock protein 1 (hsp16.9A) (Triticum aestivum (Wheat)).